Reading from the N-terminus, the 137-residue chain is NADH-quinone oxidoreductase subunit A 2 (137 aa).

Helical transmembrane passes span 12–32 (WGFAAFLLGVVGLLAFMLGVS), 66–86 (FYLVAMLFVIFDVEALFLFAW), and 95–115 (WAGLIEATIFIAILLAGLVYL).

It belongs to the complex I subunit 3 family. As to quaternary structure, NDH-1 is composed of 13 different subunits. Subunits NuoA, H, J, K, L, M, N constitute the membrane sector of the complex.

It localises to the cell inner membrane. The catalysed reaction is a quinone + NADH + 5 H(+)(in) = a quinol + NAD(+) + 4 H(+)(out). NDH-1 shuttles electrons from NADH, via FMN and iron-sulfur (Fe-S) centers, to quinones in the respiratory chain. The immediate electron acceptor for the enzyme in this species is believed to be ubiquinone. Couples the redox reaction to proton translocation (for every two electrons transferred, four hydrogen ions are translocated across the cytoplasmic membrane), and thus conserves the redox energy in a proton gradient. The sequence is that of NADH-quinone oxidoreductase subunit A 2 from Pseudomonas aeruginosa (strain ATCC 15692 / DSM 22644 / CIP 104116 / JCM 14847 / LMG 12228 / 1C / PRS 101 / PAO1).